The sequence spans 417 residues: Squalene synthase (417 aa).

NADP(+)-binding residues include Arg52 and Arg77. 3 residues coordinate Mg(2+): Asp80, Glu83, and Asp84. Arg218 lines the NADP(+) pocket. The chain crosses the membrane as a helical span at residues 284-304 (SVFNFCAIPQVMAIATLAACY). NADP(+)-binding residues include Lys315 and Arg317. The helical transmembrane segment at 384–404 (PIYLSFVMLLAALSWQYLTTL) threads the bilayer.

It belongs to the phytoene/squalene synthase family. The cofactor is Mg(2+). In terms of tissue distribution, widely expressed.

Its subcellular location is the endoplasmic reticulum membrane. It carries out the reaction 2 (2E,6E)-farnesyl diphosphate + NADPH + H(+) = squalene + 2 diphosphate + NADP(+). It catalyses the reaction 2 (2E,6E)-farnesyl diphosphate + NADH + H(+) = squalene + 2 diphosphate + NAD(+). The enzyme catalyses 2 (2E,6E)-farnesyl diphosphate = presqualene diphosphate + diphosphate. The catalysed reaction is presqualene diphosphate + NADH + H(+) = squalene + diphosphate + NAD(+). It carries out the reaction presqualene diphosphate + NADPH + H(+) = squalene + diphosphate + NADP(+). It participates in terpene metabolism; lanosterol biosynthesis; lanosterol from farnesyl diphosphate: step 1/3. Functionally, catalyzes the condensation of 2 farnesyl pyrophosphate (FPP) moieties to form squalene. Proceeds in two distinct steps. In the first half-reaction, two molecules of FPP react to form the stable presqualene diphosphate intermediate (PSQPP), with concomitant release of a proton and a molecule of inorganic diphosphate. In the second half-reaction, PSQPP undergoes heterolysis, isomerization, and reduction with NADPH or NADH to form squalene. It is the first committed enzyme of the sterol biosynthesis pathway. In Homo sapiens (Human), this protein is Squalene synthase (FDFT1).